Reading from the N-terminus, the 993-residue chain is Isoleucine--tRNA ligase (993 aa).

The 'HIGH' region signature appears at 64 to 74 (PYANGNIHIGH). An L-isoleucyl-5'-AMP-binding site is contributed by E621. Residues 662 to 666 (KMSKS) carry the 'KMSKS' region motif. An ATP-binding site is contributed by K665.

This sequence belongs to the class-I aminoacyl-tRNA synthetase family. IleS type 1 subfamily. Monomer.

The protein resides in the cytoplasm. The enzyme catalyses tRNA(Ile) + L-isoleucine + ATP = L-isoleucyl-tRNA(Ile) + AMP + diphosphate. Catalyzes the attachment of isoleucine to tRNA(Ile). As IleRS can inadvertently accommodate and process structurally similar amino acids such as valine, to avoid such errors it has two additional distinct tRNA(Ile)-dependent editing activities. One activity is designated as 'pretransfer' editing and involves the hydrolysis of activated Val-AMP. The other activity is designated 'posttransfer' editing and involves deacylation of mischarged Val-tRNA(Ile). This is Isoleucine--tRNA ligase from Mesorhizobium japonicum (strain LMG 29417 / CECT 9101 / MAFF 303099) (Mesorhizobium loti (strain MAFF 303099)).